We begin with the raw amino-acid sequence, 267 residues long: Ribosomal RNA small subunit methyltransferase NEP1 (267 aa).

A disordered region spans residues 1–46 (MSELKNGTTEPKKNETTQSDSKSKSTSTNKSSVPPASLVPVQPTAL). Positions 16 to 32 (TTQSDSKSKSTSTNKSS) are enriched in low complexity. S-adenosyl-L-methionine is bound by residues Leu-195, Gly-222, 227 to 229 (GKD), and 242 to 247 (LSDYPL).

It belongs to the class IV-like SAM-binding methyltransferase superfamily. RNA methyltransferase NEP1 family. In terms of assembly, homodimer.

Its subcellular location is the nucleus. The protein resides in the nucleolus. The enzyme catalyses a pseudouridine in rRNA + S-adenosyl-L-methionine = an N(1)-methylpseudouridine in rRNA + S-adenosyl-L-homocysteine + H(+). S-adenosyl-L-methionine-dependent pseudouridine N(1)-methyltransferase that methylates the pseudouridine corresponding to position 1189 (Psi1189) in S.cerevisiae 18S rRNA. Involved the biosynthesis of the hypermodified N1-methyl-N3-(3-amino-3-carboxypropyl) pseudouridine (m1acp3-Psi) conserved in eukaryotic 18S rRNA. Also has an essential role in 40S ribosomal subunit biogenesis independent on its methyltransferase activity, facilitating the incorporation of ribosomal protein S19 during the formation of pre-ribosomes. This is Ribosomal RNA small subunit methyltransferase NEP1 from Candida albicans (Yeast).